The following is a 357-amino-acid chain: Glucose-6-phosphatase catalytic subunit 1 (357 aa).

Over 1–28 (MEKGMNVLHDFGIQSTHYLQVNYQNSQD) the chain is Lumenal. A helical membrane pass occupies residues 29–49 (WFILVSVIADLRNAFYVLFPI). Topologically, residues 50–60 (WFHLREAVGIK) are cytoplasmic. A helical transmembrane segment spans residues 61-81 (LLWVAVIGDWLNLVFKWILFG). Over 82-117 (QRPYWWVLDTDYYSNTSAPLIKQFPVTCETGPGSPS) the chain is Lumenal. Arg83 is a substrate binding site. Asn96 carries N-linked (GlcNAc...) asparagine glycosylation. Residues 118 to 138 (GHAMGTAGVYYVMVTSTLSIF) traverse the membrane as a helical segment. The active-site Proton donor is the His119. The Cytoplasmic segment spans residues 139–147 (RGKKKPTYR). A helical membrane pass occupies residues 148 to 168 (FRCLNVMLWLGFWVVQLNVCL). Residues 169 to 170 (SR) are Lumenal-facing. Residue Arg170 coordinates substrate. The chain crosses the membrane as a helical span at residues 171 to 191 (IYLAAHFPHQVVAGVLSGIAV). His176 serves as the catalytic Nucleophile. The Cytoplasmic segment spans residues 192-209 (AETFRHIQSIYNASLKKY). A helical transmembrane segment spans residues 210-230 (FLITCFLFSFAIGFYLLLKWL). Topologically, residues 231 to 254 (GVDLLWTLEKAKRRCERPEWVHID) are lumenal. A helical transmembrane segment spans residues 255 to 275 (TTPFASLLKNLGTLFGLGLAL). Residues 276–291 (NSSMYRESCKGKLSKW) lie on the Cytoplasmic side of the membrane. A helical membrane pass occupies residues 292 to 312 (FPFRLSCIVASLVLLHLFDSL). Residues 313 to 320 (KPPSQIEL) lie on the Lumenal side of the membrane. Residues 321–341 (IFYVLSFCKSAAVPLASVSLI) traverse the membrane as a helical segment. Residues 342–357 (PYCLAWVLGQPNKKTV) lie on the Cytoplasmic side of the membrane. The Prevents secretion from ER signature appears at 354 to 357 (KKTV).

Belongs to the glucose-6-phosphatase family.

The protein resides in the endoplasmic reticulum membrane. It carries out the reaction D-glucose 6-phosphate + H2O = D-glucose + phosphate. It functions in the pathway carbohydrate biosynthesis; gluconeogenesis. Functionally, hydrolyzes glucose-6-phosphate to glucose in the endoplasmic reticulum. Forms with the glucose-6-phosphate transporter (SLC37A4/G6PT) the complex responsible for glucose production in the terminal step of glycogenolysis and gluconeogenesis. Hence, it is the key enzyme in homeostatic regulation of blood glucose levels. The chain is Glucose-6-phosphatase catalytic subunit 1 (G6PC1) from Bos taurus (Bovine).